Here is a 244-residue protein sequence, read N- to C-terminus: tRNA (guanine-N(1)-)-methyltransferase (244 aa).

Residues glycine 113 and 132–137 (IGDYVL) each bind S-adenosyl-L-methionine.

It belongs to the RNA methyltransferase TrmD family. In terms of assembly, homodimer.

It is found in the cytoplasm. The catalysed reaction is guanosine(37) in tRNA + S-adenosyl-L-methionine = N(1)-methylguanosine(37) in tRNA + S-adenosyl-L-homocysteine + H(+). In terms of biological role, specifically methylates guanosine-37 in various tRNAs. The chain is tRNA (guanine-N(1)-)-methyltransferase from Shouchella clausii (strain KSM-K16) (Alkalihalobacillus clausii).